We begin with the raw amino-acid sequence, 51 residues long: uncharacterized protein (51 aa).

To E.coli YdfA.

This is an uncharacterized protein from Escherichia coli O157:H7.